Here is a 387-residue protein sequence, read N- to C-terminus: MKKLLKSVLAFAVLGSASSLHALPVGNPAEPSLMIDGILWEGFGGDPCDPCTTWCDAISLRLGYYGDFVFDRVLKTDVNKQFEMGAAPTGDADLTTAPTPASRENPAYGKHMQDAEMFTNAAYMALNIWDRFDVFCTLGATSGYLKGNSAAFNLVGLFGRDETAVAADDIPNVSLSQAVVELYTDTAFAWSVGARAALWECGCATLGASFQYAQSKPKVEELNVLCNAAEFTINKPKGYVGQEFPLNIKAGTVSATDTKDASIDYHEWQASLALSYRLNMFTPYIGVKWSRASFDADTIRIAQPKLETSILKMTTWNPTISGSGIDVDTKITDTLQIVSLQLNKMKSRKSCGLAIGTTIVDADKYAVTVETRLIDERAAHVNAQFRF.

The signal sequence occupies residues 1–22; the sequence is MKKLLKSVLAFAVLGSASSLHA.

Belongs to the chlamydial porin (CP) (TC 1.B.2) family. As to quaternary structure, part of a disulfide cross-linked outer membrane complex (COMC) composed of the major outer membrane porin (MOMP), the small cysteine-rich protein (OmcA) and the large cysteine-rich periplasmic protein (OmcB).

The protein resides in the cell outer membrane. Functionally, in elementary bodies (EBs, the infectious stage, which is able to survive outside the host cell) provides the structural integrity of the outer envelope through disulfide cross-links with the small cysteine-rich protein and the large cysteine-rich periplasmic protein. It has been described in publications as the Sarkosyl-insoluble COMC (Chlamydia outer membrane complex), and serves as the functional equivalent of peptidoglycan. Its function is as follows. Permits diffusion of specific solutes through the outer membrane. This Chlamydia muridarum (strain MoPn / Nigg) protein is Major outer membrane porin (ompA).